We begin with the raw amino-acid sequence, 195 residues long: FMN-dependent NADH:quinone oxidoreductase (195 aa).

FMN is bound by residues serine 10, serine 16–serine 18, methionine 91–phenylalanine 94, and threonine 135–glycine 138.

Belongs to the azoreductase type 1 family. As to quaternary structure, homodimer. It depends on FMN as a cofactor.

The enzyme catalyses 2 a quinone + NADH + H(+) = 2 a 1,4-benzosemiquinone + NAD(+). It catalyses the reaction N,N-dimethyl-1,4-phenylenediamine + anthranilate + 2 NAD(+) = 2-(4-dimethylaminophenyl)diazenylbenzoate + 2 NADH + 2 H(+). Its function is as follows. Quinone reductase that provides resistance to thiol-specific stress caused by electrophilic quinones. Also exhibits azoreductase activity. Catalyzes the reductive cleavage of the azo bond in aromatic azo compounds to the corresponding amines. The sequence is that of FMN-dependent NADH:quinone oxidoreductase from Vibrio vulnificus (strain YJ016).